The primary structure comprises 212 residues: COP9 signalosome complex subunit 8 (212 aa).

Positions Thr26 to Asp193 constitute a PCI domain.

The protein belongs to the CSN8 family. In terms of assembly, component of the COP9 signalosome (CSN) complex.

It localises to the cytoplasm. Its subcellular location is the nucleus. In terms of biological role, component of the COP9 signalosome (CSN) complex that acts as an regulator of the ubiquitin (Ubl) conjugation pathway by mediating the deneddylation of the cullin subunit of SCF-type E3 ubiquitin-protein ligase complexes. The CSN complex seems to link protein degradation to sexual development. This chain is COP9 signalosome complex subunit 8 (csnH), found in Emericella nidulans (strain FGSC A4 / ATCC 38163 / CBS 112.46 / NRRL 194 / M139) (Aspergillus nidulans).